Consider the following 441-residue polypeptide: CBL-interacting serine/threonine-protein kinase 3 (441 aa).

In terms of domain architecture, Protein kinase spans 14 to 269 (YEVGRTIGEG…PQEVFEDEWF (256 aa)). Residues 20–28 (IGEGTFAKV) and K43 each bind ATP. The Proton acceptor role is filled by D137. The segment at 155-184 (DFGLSALSQQVRDDGLLHTSCGTPNYVAPE) is activation loop. One can recognise an NAF domain in the interval 307–331 (EQPAAINAFEIISMSRGLNLENLFD). Residues 337-366 (KRETRITLRGGANEIIEKIEEAAKPLGFDV) are PPI.

Belongs to the protein kinase superfamily. CAMK Ser/Thr protein kinase family. SNF1 subfamily. Interacts with CBL3 and CBL9. Mn(2+) is required as a cofactor. Mostly expressed in germinating seeds and young seedlings. Detected at low levels in roots, stems, leaves and flowers.

It carries out the reaction L-seryl-[protein] + ATP = O-phospho-L-seryl-[protein] + ADP + H(+). It catalyses the reaction L-threonyl-[protein] + ATP = O-phospho-L-threonyl-[protein] + ADP + H(+). Its function is as follows. Involved in the resistance to some abiotic stresses (e.g. high salt, hyperosmotic stress) in young seedlings, by regulating the expression of several stress-inducible genes (cold- and salt-induced genes but not drought-responsive genes). Required for the ABA response during germination. CIPK serine-threonine protein kinases interact with CBL proteins. Binding of a CBL protein to the regulatory NAF domain of CIPK protein lead to the activation of the kinase in a calcium-dependent manner. The CBL9/CIPK3 complex acts in the regulation of abscisic acid response in seed germination. This chain is CBL-interacting serine/threonine-protein kinase 3 (CIPK3), found in Arabidopsis thaliana (Mouse-ear cress).